The chain runs to 450 residues: MVLPVEPEYEQALSELQNSLKPFLAANPDYEKALEIVQIPERVLQFRVVWEDDQGKAQVNRGFRVQYNSALGPYKGGLRLHPSVNLSILKFLGFEQTFKNALTGLSMGGGKGGSDFDPKGKSDGEIRRFCTSFMSELFRHIGQDTDVPAGDIGTGAREIGYLFGAYKKLQNEFVGMLTGKGLAWGGSFIRPEATGYGLIYYVEHMIAKAAPEYSLSKPETLVAISGSGNVAQFTALKVIELGATVLSLSDSKGSLIAEKGYTKEFIKEIGQLKLKGGALESLAQREGYTYHAGKRPWSLLPVVHVALPGATQNEVSKTEAEDLIKAGVRIVAEGSNMGCTEDAIAVFEASRKAGAGGVWYAPGKASNCGGVAVSGLEMAQNSQRLAWTTDQVDQKLKKIMAECYEICLSAGTKWSGEEIKDGVLPSLLSGANVAGFIKVADAMREHGDWW.

Residue lysine 111 is part of the active site.

It belongs to the Glu/Leu/Phe/Val dehydrogenases family. In terms of assembly, homohexamer.

It carries out the reaction L-glutamate + NADP(+) + H2O = 2-oxoglutarate + NH4(+) + NADPH + H(+). In Laccaria bicolor (strain S238N-H82 / ATCC MYA-4686) (Bicoloured deceiver), this protein is NADP-specific glutamate dehydrogenase (GDHA).